Here is a 435-residue protein sequence, read N- to C-terminus: 5-hydroxybenzimidazole synthase (435 aa).

Substrate contacts are provided by residues Met-95, Tyr-124, His-163, 186-188, 227-230, and Glu-266; these read SKG and NGLR. His-270 contributes to the Zn(2+) binding site. A substrate-binding site is contributed by Tyr-293. His-334 is a Zn(2+) binding site. [4Fe-4S] cluster is bound by residues Cys-410, Cys-413, and Cys-417.

Belongs to the ThiC family. 5-hydroxybenzimidazole synthase subfamily. Homodimer. [4Fe-4S] cluster is required as a cofactor.

The catalysed reaction is 5-amino-1-(5-phospho-beta-D-ribosyl)imidazole + AH2 + S-adenosyl-L-methionine = 5-hydroxybenzimidazole + 5'-deoxyadenosine + formate + L-methionine + A + NH4(+) + phosphate + 2 H(+). Its function is as follows. Catalyzes the conversion of aminoimidazole ribotide (AIR) to 5-hydroxybenzimidazole (5-HBI) in a radical S-adenosyl-L-methionine (SAM)-dependent reaction. Is thus involved in the anaerobic biosynthesis of the benzimidazole lower axial ligand of the cobamide produced by G.sulfurreducens. This chain is 5-hydroxybenzimidazole synthase, found in Geobacter sulfurreducens (strain ATCC 51573 / DSM 12127 / PCA).